The primary structure comprises 211 residues: Proteasome subunit beta 2 (211 aa).

Residues 1 to 17 (MVIMGNELQLENKILKG) constitute a propeptide, removed in mature form; by autocatalysis. The active-site Nucleophile is the Thr18.

The protein belongs to the peptidase T1B family. As to quaternary structure, the 20S proteasome core is composed of 14 alpha and 14 beta subunits that assemble into four stacked heptameric rings, resulting in a barrel-shaped structure. The two inner rings, each composed of seven catalytic beta subunits, are sandwiched by two outer rings, each composed of seven alpha subunits. The catalytic chamber with the active sites is on the inside of the barrel. Has a gated structure, the ends of the cylinder being occluded by the N-termini of the alpha-subunits. Is capped at one or both ends by the proteasome regulatory ATPase, PAN.

It is found in the cytoplasm. The enzyme catalyses Cleavage of peptide bonds with very broad specificity.. With respect to regulation, the formation of the proteasomal ATPase PAN-20S proteasome complex, via the docking of the C-termini of PAN into the intersubunit pockets in the alpha-rings, triggers opening of the gate for substrate entry. Interconversion between the open-gate and close-gate conformations leads to a dynamic regulation of the 20S proteasome proteolysis activity. Functionally, component of the proteasome core, a large protease complex with broad specificity involved in protein degradation. This is Proteasome subunit beta 2 from Saccharolobus solfataricus (strain 98/2) (Sulfolobus solfataricus).